A 521-amino-acid chain; its full sequence is Aldehyde dehydrogenase, mitochondrial (521 aa).

A mitochondrion-targeting transit peptide spans 1–21; sequence MLRPAALAAARLVLRQGRRLL. The short motif at 13 to 28 is the SIFI-degron element; sequence VLRQGRRLLSAAPTQA. Residues K56, K77, and K163 each carry the N6-acetyllysine modification. 266–271 is a binding site for NAD(+); the sequence is GSTEVG. Residue E289 is the Proton acceptor of the active site. C323 functions as the Nucleophile in the catalytic mechanism. 7 positions are modified to N6-acetyllysine: K372, K379, K387, K430, K432, K445, and K455.

The protein belongs to the aldehyde dehydrogenase family. Homotetramer. Post-translationally, in response to mitochondrial stress, the precursor protein is ubiquitinated by the SIFI complex in the cytoplasm before mitochondrial import, leading to its degradation. Within the SIFI complex, UBR4 initiates ubiquitin chain that are further elongated or branched by KCMF1.

Its subcellular location is the mitochondrion matrix. It catalyses the reaction an aldehyde + NAD(+) + H2O = a carboxylate + NADH + 2 H(+). It functions in the pathway alcohol metabolism; ethanol degradation; acetate from ethanol: step 2/2. Its function is as follows. Required for clearance of cellular formaldehyde, a cytotoxic and carcinogenic metabolite that induces DNA damage. This chain is Aldehyde dehydrogenase, mitochondrial (ALDH2), found in Sus scrofa (Pig).